A 343-amino-acid polypeptide reads, in one-letter code: Ribosomal RNA small subunit methyltransferase C (343 aa).

This sequence belongs to the methyltransferase superfamily. RsmC family. In terms of assembly, monomer.

Its subcellular location is the cytoplasm. It catalyses the reaction guanosine(1207) in 16S rRNA + S-adenosyl-L-methionine = N(2)-methylguanosine(1207) in 16S rRNA + S-adenosyl-L-homocysteine + H(+). In terms of biological role, specifically methylates the guanine in position 1207 of 16S rRNA in the 30S particle. The sequence is that of Ribosomal RNA small subunit methyltransferase C from Escherichia coli O8 (strain IAI1).